A 1063-amino-acid chain; its full sequence is MASTTPITMEDLQKALEAQSRALRAGLAAGASQSRRPRPPRQRDSSTSGDDSGRDSGGPRRRRGNRGRGQRKDWSRAPPPPEERQESRSQTPAPKPSRAPPQQPQPPRMQTGRGGSAPRPELGPPTNPFQAAVARGLRPPLHDPDTEAPTEACVTSWLWSEGEGAVFYRVDLHFTNLGTPPLDEDGRWDPALMYNPCGPEPPAHVVRAYNQPAGDVRGVWGKGERTYAEQDFRVGGTRWHRLLRMPVRGLDGDTAPLPPHTTERIETRSARHPWRIRFGAPQAFLAGLLLAAVAVGTARAGLQPRADMAAPPMPPQPPRAHGQHYGHHHHQLPFLGHDGHHGGTLRVGQHHRNASDVLPGHWLQGGWGCYNLSDWHQGTHVCHTKHMDFWCVEHDRPPPATPTSLTTAANSTTAATPATAPPPCHAGLNDSCGGFLSGCGPMRLRHGADTRCGRLICGLSTTAQYPPTRFGCAMRWGLPPWELVVLTARPEDGWTCRGVPAHPGTRCPELVSPMGRATCSPASALWLATANALSLDHAFAAFVLLVPWVLIFMVCRRACRRRGAAAALTAVVLQGYNPPAYGEEAFTYLCTAPGCATQTPVPVRLAGVRFESKIVDGGCFAPWDLEATGACICEIPTDVSCEGLGAWVPTAPCARIWNGTQRACTFWAVNAYSSGGYAQLASYFNPGGSYYKQYHPTACEVEPAFGHSDAACWGFPTDTVMSVFALASYVQHPHKTVRVKFHTETRTVWQLSVAGVSCNVTTEHPFCNTPHGQLEVQVPPDPGDLVEYIMNYTGNQQSRWGLGSPNCHGPDWASPVCQRHSPDCSRLVGATPERPRLRLVDADDPLLRTAPGPGEVWVTPVIGSQARKCGLHIRAGPYGHATVEMPEWIHAHTTSDPWHPPGPLGLKFKTVRPVALPRALAPPRNVRVTGCYQCGTPALVEGLAPGGGNCHLTVNGEDVGAFPPGKFVTAALLNTPPPYQVSCGGESDRASARVIDPAAQSFTGVVYGTHTTAVSETRQTWAEWAAAHWWQLTLGAICALLLAGLLACCAKCLYYLRGAIAPR.

The interval 1–131 (MASTTPITME…LGPPTNPFQA (131 aa)) is disordered. The segment covering 18-34 (AQSRALRAGLAAGASQS) has biased composition (low complexity). Residues 30–69 (GASQSRRPRPPRQRDSSTSGDDSGRDSGGPRRRRGNRGRG) are human C1QBP/SF2P32-binding. Phosphoserine; by host is present on Ser-46. Residues 59 to 69 (PRRRRGNRGRG) show a composition bias toward basic residues. Residues 70–87 (QRKDWSRAPPPPEERQES) show a composition bias toward basic and acidic residues. Pro residues predominate over residues 93-107 (APKPSRAPPQQPQPP). A disulfide bridge connects residues Cys-153 and Cys-197. Positions 279-300 (GAPQAFLAGLLLAAVAVGTARA) are functions as E2 signal peptide. Over 301 to 534 (GLQPRADMAA…LWLATANALS (234 aa)) the chain is Extracellular. Residues Asn-353, Asn-371, Asn-410, and Asn-429 are each glycosylated (N-linked (GlcNAc...) asparagine; by host). A helical transmembrane segment spans residues 535–555 (LDHAFAAFVLLVPWVLIFMVC). The Cytoplasmic portion of the chain corresponds to 556 to 582 (RRACRRRGAAAALTAVVLQGYNPPAYG). The segment at 563 to 582 (GAAAALTAVVLQGYNPPAYG) is functions as E1 signal peptide. Topologically, residues 583-1028 (EEAFTYLCTA…QTWAEWAAAH (446 aa)) are extracellular. Intrachain disulfides connect Cys-590/Cys-595, Cys-619/Cys-824, Cys-641/Cys-653, Cys-699/Cys-712, Cys-758/Cys-767, Cys-807/Cys-817, Cys-931/Cys-934, and Cys-950/Cys-983. N-linked (GlcNAc...) asparagine; by host glycosylation is present at Asn-658. Ca(2+) contacts are provided by Asn-670 and Ala-671. Asp-718 and Thr-719 together coordinate Ca(2+). 2 N-linked (GlcNAc...) asparagine; by host glycosylation sites follow: Asn-759 and Asn-791. Residues Thr-1011 and Thr-1012 are each glycosylated (O-linked (GalNAc...) threonine; by host). The helical transmembrane segment at 1029-1049 (WWQLTLGAICALLLAGLLACC) threads the bilayer. The Cytoplasmic portion of the chain corresponds to 1050 to 1063 (AKCLYYLRGAIAPR).

In terms of assembly, homodimer; further assembles into homooligomer. Interacts with human C1QBP. Interacts (via N-terminus) with protease/methyltransferase p150. As to quaternary structure, heterodimer with spike glycoprotein E2. Heterodimer with spike glycoprotein E1. Post-translationally, structural polyprotein: Specific enzymatic cleavages in vivo yield mature proteins. Two signal peptidase-mediated cleavages within the polyprotein produce the structural proteins capsid, E2, and E1. The E2 signal peptide remains attached to the C-terminus of the capsid protein after cleavage by the signal peptidase. Another signal peptide at E2 C-terminus directs E1 to the ER, with a similar mechanism. In terms of processing, contains three N-linked oligosaccharides. Capsid is phosphorylated on Ser-46 by host. This phosphorylation negatively regulates capsid protein RNA-binding activity. Dephosphorylated by human PP1A.

It is found in the virion. The protein resides in the host cytoplasm. The protein localises to the host mitochondrion. It localises to the virion membrane. Its subcellular location is the host Golgi apparatus membrane. Functionally, capsid protein interacts with genomic RNA and assembles into icosahedric core particles 65-70 nm in diameter. The resulting nucleocapsid eventually associates with the cytoplasmic domain of E2 at the cell membrane, leading to budding and formation of mature virions from host Golgi membranes. Phosphorylation negatively regulates RNA-binding activity, possibly delaying virion assembly during the viral replication phase. Capsid protein dimerizes and becomes disulfide-linked in the virion. Modulates genomic RNA replication. Modulates subgenomic RNA synthesis by interacting with human C1QBP/SF2P32. Induces both perinuclear clustering of mitochondria and the formation of electron-dense intermitochondrial plaques, both hallmarks of rubella virus infected cells. Induces apoptosis when expressed in transfected cells. In terms of biological role, responsible for viral attachment to target host cell, by binding to the cell receptor. Its transport to the plasma membrane depends on interaction with E1 protein. The surface glycoproteins display an irregular helical organization and a pseudo-tetrameric inner nucleocapsid arrangement. Class II viral fusion protein. Fusion activity is inactive as long as E1 is bound to E2 in mature virion. After virus attachment to target cell and clathrin-mediated endocytosis, acidification of the endosome would induce dissociation of E1/E2 heterodimer and concomitant trimerization of the E1 subunits. This E1 homotrimer is fusion active, and promotes release of viral nucleocapsid in cytoplasm after endosome and viral membrane fusion. The cytoplasmic tail of spike glycoprotein E1 modulates virus release. The surface glycoproteins display an irregular helical organization and a pseudo-tetrameric inner nucleocapsid arrangement. This chain is Structural polyprotein, found in Homo sapiens (Human).